A 152-amino-acid chain; its full sequence is MDNVQPKIKHRPFCFSVKGHVKMLRLALTVTSMTFFIIAQAPEPYIVITGFEVTVILFFILLYVLRLDRLMKWLFWPLLDIINSLVTTVFMLIVSVLALIPETTTLTVGGGVFALVTAVCCLADGALIYRKLLFNPSGPYQKKPVHEKKEVL.

The MARVEL domain occupies Phe-13–Leu-133. The next 3 helical transmembrane spans lie at Tyr-45–Leu-65, Ile-81–Pro-101, and Val-108–Ile-128.

The protein belongs to the chemokine-like factor family. In terms of tissue distribution, isoform 1, isoform 2, isoform 3 and isoform 4 have highest expression levels in adult spleen, lung, testis, ovary, peripheral blood leukocyte, placenta, pancreas, and in fetal brain, skeletal muscle, thymus and heart. Lower expression levels in adult skeletal muscle, liver, thymus colon, prostate and fetal spleen and liver.

The protein resides in the secreted. It is found in the membrane. Partly inhibited by interleukin 10. Functionally, may play an important role in inflammation and regeneration of skeletal muscle. Essential for embryonic development. Its function is as follows. Has chemotactic response in monocytes, neutrophils and lymphocytes. Binds CCR4. This chain is Chemokine-like factor (CKLF), found in Homo sapiens (Human).